We begin with the raw amino-acid sequence, 1892 residues long: Plexin A3 (1892 aa).

The signal sequence occupies residues 1–20 (MRSLWLLVFSFSVLTGTNMA). Residues 21–509 (FPMILSERPE…SDKQVSRLPV (489 aa)) enclose the Sema domain. Topologically, residues 21–1240 (FPMILSERPE…IYSDSTLTLP (1220 aa)) are extracellular. N68 carries an N-linked (GlcNAc...) asparagine glycan. 9 disulfides stabilise this stretch: C86–C95, C121–C129, C283–C404, C299–C355, C373–C392, C512–C529, C518–C560, C521–C538, and C532–C544. An N-linked (GlcNAc...) asparagine glycan is attached at N569. C595 and C615 are oxidised to a cystine. 4 IPT/TIG domains span residues 861–955 (PRIT…YSFV), 957–1041 (PSFS…YIYT), 1044–1143 (PNIS…FTYY), and 1146–1232 (PTFE…LHIY). N-linked (GlcNAc...) asparagine glycosylation occurs at N1183. The helical transmembrane segment at 1241–1261 (AIIGIGAGGGVLLIAIIAVLI) threads the bilayer. Residues 1262 to 1315 (AYKRKTRDADRTLKRLQLQMDNLESRVALECKEAFAELQTDIQELTNDMDGVKI) adopt a coiled-coil conformation. At 1262-1892 (AYKRKTRDAD…QAINLMSGSS (631 aa)) the chain is on the cytoplasmic side.

The protein belongs to the plexin family. As to expression, detected in primary motor neurons in the embryonic nervous system.

The protein localises to the cell membrane. Functionally, coreceptor for class 3 semaphorins. Necessary for signaling by class 3 semaphorins and subsequent remodeling of the cytoskeleton. Plays a role in axon guidance in the developing nervous system. Class 3 semaphorins bind to a complex composed of a neuropilin and a plexin. The plexin modulates the affinity of the complex for specific semaphorins, and its cytoplasmic domain is required for the activation of down-stream signaling events in the cytoplasm. This chain is Plexin A3 (plxna3), found in Danio rerio (Zebrafish).